Here is a 423-residue protein sequence, read N- to C-terminus: COP9 signalosome complex subunit 3 (423 aa).

The PCI domain maps to 197–365 (NFERALYFFE…GMVCFHDNPE (169 aa)). The disordered stretch occupies residues 402–423 (QFVQKSMGTQEDDVGSKTSSYS).

Belongs to the CSN3 family. In terms of assembly, component of the CSN complex, probably composed of cops1, cops2, cops3, cops4, cops5, cops6, cops7, cops8 and cops9.

It localises to the cytoplasm. The protein resides in the nucleus. Its function is as follows. Component of the COP9 signalosome complex (CSN), a complex involved in various cellular and developmental processes. The CSN complex is an essential regulator of the ubiquitin (Ubl) conjugation pathway by mediating the deneddylation of the cullin subunits of E3 ligase complexes, leading to modify the Ubl ligase activity. The protein is COP9 signalosome complex subunit 3 (cops3) of Danio rerio (Zebrafish).